A 392-amino-acid chain; its full sequence is Speckle-type POZ protein-like B (392 aa).

In terms of domain architecture, MATH spans 31-161 (KFSYMWTINN…DDKLTLFCEV (131 aa)). Residues 200–267 (TDCSLFVGGQ…IYTGKAPNLE (68 aa)) form the BTB domain.

The protein belongs to the Tdpoz family. Homodimer. Heterodimer with SPOP. Component of cullin-RING-based BCR (BTB-CUL3-RBX1) E3 ubiquitin-protein ligase complexes containing homodimeric SPOPL or the heterodimer formed by SPOP and SPOPL.

The protein localises to the nucleus. The protein operates within protein modification; protein ubiquitination. Component of a cullin-RING-based BCR (BTB-CUL3-RBX1) E3 ubiquitin-protein ligase complex that mediates the ubiquitination and subsequent proteasomal degradation of target proteins, but with relatively low efficiency. In Danio rerio (Zebrafish), this protein is Speckle-type POZ protein-like B (spoplb).